The chain runs to 122 residues: Histone H2B, gonadal (122 aa).

The disordered stretch occupies residues 1 to 31 (MPPKPSGKGQKKAGKAKGAPRTDKKRRRKRK). Residue proline 2 is modified to N,N-dimethylproline. Serine 109 carries an O-linked (GlcNAc) serine glycan. A Glycyl lysine isopeptide (Lys-Gly) (interchain with G-Cter in ubiquitin) cross-link involves residue lysine 117.

Belongs to the histone H2B family. As to quaternary structure, the nucleosome is a histone octamer containing two molecules each of H2A, H2B, H3 and H4 assembled in one H3-H4 heterotetramer and two H2A-H2B heterodimers. The octamer wraps approximately 147 bp of DNA. Post-translationally, monoubiquitination of Lys-117 gives a specific tag for epigenetic transcriptional activation and is also prerequisite for histone H3 'Lys-4' and 'Lys-79' methylation. GlcNAcylation at Ser-109 promotes monoubiquitination of Lys-117. It fluctuates in response to extracellular glucose, and associates with transcribed genes.

The protein resides in the nucleus. It is found in the chromosome. In terms of biological role, core component of nucleosome. Nucleosomes wrap and compact DNA into chromatin, limiting DNA accessibility to the cellular machineries which require DNA as a template. Histones thereby play a central role in transcription regulation, DNA repair, DNA replication and chromosomal stability. DNA accessibility is regulated via a complex set of post-translational modifications of histones, also called histone code, and nucleosome remodeling. The protein is Histone H2B, gonadal of Asterias rubens (Common European starfish).